A 198-amino-acid chain; its full sequence is Large ribosomal subunit protein uL23c (198 aa).

A chloroplast-targeting transit peptide spans 1–76 (MATTAPNLHS…SFGRDLMVAQ (76 aa)).

Belongs to the universal ribosomal protein uL23 family. In terms of assembly, component of the chloroplast large ribosomal subunit (LSU). Mature 70S chloroplast ribosomes of higher plants consist of a small (30S) and a large (50S) subunit. The 30S small subunit contains 1 molecule of ribosomal RNA (16S rRNA) and 24 different proteins. The 50S large subunit contains 3 rRNA molecules (23S, 5S and 4.5S rRNA) and 33 different proteins.

The protein resides in the plastid. The protein localises to the chloroplast. In terms of biological role, component of the chloroplast ribosome (chloro-ribosome), a dedicated translation machinery responsible for the synthesis of chloroplast genome-encoded proteins, including proteins of the transcription and translation machinery and components of the photosynthetic apparatus. The sequence is that of Large ribosomal subunit protein uL23c (RPL23) from Spinacia oleracea (Spinach).